The chain runs to 245 residues: Serine/arginine-rich splicing factor 1B (245 aa).

The region spanning 15–90 (CRIYVGNLPP…YRLRVEFPRS (76 aa)) is the RRM 1 domain. Disordered regions lie at residues 89 to 116 (RSGR…PPSR) and 192 to 245 (KVDG…RSRT). Positions 91 to 106 (GRGGGRGGGGGGGVGA) are enriched in gly residues. In terms of domain architecture, RRM 2 spans 120–194 (YRVIVSGLPP…ETAYIRVKVD (75 aa)). Residues 204–245 (SRSRSRSRSRSRSNSRSRSYSPRRSRGSPRYSPRHSRSRSRT) show a composition bias toward basic residues.

The protein belongs to the splicing factor SR family.

The protein localises to the cytoplasm. Its subcellular location is the nucleus speckle. May play a role in preventing exon skipping, ensuring the accuracy of splicing and regulating alternative splicing. The polypeptide is Serine/arginine-rich splicing factor 1B (srsf1b) (Danio rerio (Zebrafish)).